We begin with the raw amino-acid sequence, 70 residues long: Large ribosomal subunit protein bL31 (70 aa).

4 residues coordinate Zn(2+): C16, C18, C37, and C40.

The protein belongs to the bacterial ribosomal protein bL31 family. Type A subfamily. Part of the 50S ribosomal subunit. Requires Zn(2+) as cofactor.

Binds the 23S rRNA. The protein is Large ribosomal subunit protein bL31 of Shewanella frigidimarina (strain NCIMB 400).